Here is an 89-residue protein sequence, read N- to C-terminus: Large ribosomal subunit protein eL34 (89 aa).

Belongs to the eukaryotic ribosomal protein eL34 family.

The polypeptide is Large ribosomal subunit protein eL34 (rpl34e) (Methanocaldococcus jannaschii (strain ATCC 43067 / DSM 2661 / JAL-1 / JCM 10045 / NBRC 100440) (Methanococcus jannaschii)).